A 159-amino-acid polypeptide reads, in one-letter code: Aspartate carbamoyltransferase regulatory chain (159 aa).

Residues Cys111, Cys116, Cys141, and Cys144 each contribute to the Zn(2+) site.

The protein belongs to the PyrI family. In terms of assembly, contains catalytic and regulatory chains. The cofactor is Zn(2+).

In terms of biological role, involved in allosteric regulation of aspartate carbamoyltransferase. This chain is Aspartate carbamoyltransferase regulatory chain, found in Aeropyrum pernix (strain ATCC 700893 / DSM 11879 / JCM 9820 / NBRC 100138 / K1).